The following is a 703-amino-acid chain: Elongation factor G (703 aa).

A tr-type G domain is found at 7 to 287; the sequence is KFTRNIGIAA…AVMRYLPSPA (281 aa). GTP contacts are provided by residues 16–23, 84–88, and 138–141; these read AHIDAGKT, DTPGH, and NKMD.

It belongs to the TRAFAC class translation factor GTPase superfamily. Classic translation factor GTPase family. EF-G/EF-2 subfamily.

It is found in the cytoplasm. Catalyzes the GTP-dependent ribosomal translocation step during translation elongation. During this step, the ribosome changes from the pre-translocational (PRE) to the post-translocational (POST) state as the newly formed A-site-bound peptidyl-tRNA and P-site-bound deacylated tRNA move to the P and E sites, respectively. Catalyzes the coordinated movement of the two tRNA molecules, the mRNA and conformational changes in the ribosome. The polypeptide is Elongation factor G (Christiangramia forsetii (strain DSM 17595 / CGMCC 1.15422 / KT0803) (Gramella forsetii)).